The following is a 291-amino-acid chain: tRNA U34 carboxymethyltransferase (291 aa).

Carboxy-S-adenosyl-L-methionine contacts are provided by residues Lys61, Trp75, Lys80, Gly100, 122–124 (DPS), 149–150 (VE), Tyr169, and Arg284.

This sequence belongs to the class I-like SAM-binding methyltransferase superfamily. CmoB family. In terms of assembly, homotetramer.

It catalyses the reaction carboxy-S-adenosyl-L-methionine + 5-hydroxyuridine(34) in tRNA = 5-carboxymethoxyuridine(34) in tRNA + S-adenosyl-L-homocysteine + H(+). In terms of biological role, catalyzes carboxymethyl transfer from carboxy-S-adenosyl-L-methionine (Cx-SAM) to 5-hydroxyuridine (ho5U) to form 5-carboxymethoxyuridine (cmo5U) at position 34 in tRNAs. This is tRNA U34 carboxymethyltransferase from Campylobacter jejuni subsp. jejuni serotype O:6 (strain 81116 / NCTC 11828).